Here is a 1383-residue protein sequence, read N- to C-terminus: DNA-directed RNA polymerase subunit beta (1383 aa).

This sequence belongs to the RNA polymerase beta chain family. The RNAP catalytic core consists of 2 alpha, 1 beta, 1 beta' and 1 omega subunit. When a sigma factor is associated with the core the holoenzyme is formed, which can initiate transcription.

It catalyses the reaction RNA(n) + a ribonucleoside 5'-triphosphate = RNA(n+1) + diphosphate. In terms of biological role, DNA-dependent RNA polymerase catalyzes the transcription of DNA into RNA using the four ribonucleoside triphosphates as substrates. This is DNA-directed RNA polymerase subunit beta from Xanthomonas oryzae pv. oryzae (strain MAFF 311018).